Reading from the N-terminus, the 748-residue chain is ATP-dependent rRNA helicase SPB4 (748 aa).

Positions 15 to 43 (WAKLNPPLSPWILDVINSMGFKNMTPVQA) match the Q motif motif. In terms of domain architecture, Helicase ATP-binding spans 46 to 260 (IPRAVKNQDC…GLGLRNPVRI (215 aa)). 59 to 66 (AVTGSGKT) is a binding site for ATP. The tract at residues 119–156 (ESEEETGDVEAHAPPFASSSRSPSPQTPDKPLFPLPML) is disordered. Over residues 132–142 (PPFASSSRSPS) the composition is skewed to low complexity. The segment covering 143 to 152 (PQTPDKPLFP) has biased composition (pro residues). The short motif at 207 to 210 (DEAD) is the DEAD box element. Positions 295 to 460 (KTLQLIRLLL…KAQRSILDFL (166 aa)) constitute a Helicase C-terminal domain. The interval 614 to 748 (AQRADNQSSN…IGGGMFDDLE (135 aa)) is disordered. 2 stretches are compositionally biased toward basic and acidic residues: residues 626-669 (ARAE…KYEW) and 708-730 (EIGK…KESS). Residues 732–748 (GGAGGGGIGGGMFDDLE) are compositionally biased toward gly residues.

This sequence belongs to the DEAD box helicase family. DDX55/SPB4 subfamily. As to quaternary structure, component of pre-60S ribosomal complexes.

It is found in the nucleus. The protein localises to the nucleolus. It carries out the reaction ATP + H2O = ADP + phosphate + H(+). ATP-binding RNA helicase involved in the biogenesis of 60S ribosomal subunits. Binds 90S pre-ribosomal particles and dissociates from pre-60S ribosomal particles after processing of 27SB pre-rRNA. Required for the normal formation of 18S rRNA through the processing of pre-rRNAs at sites A0, A1 and A2, and the normal formation of 25S and 5.8S rRNAs through the processing of pre-rRNAs at sites C1 and C2. The polypeptide is ATP-dependent rRNA helicase SPB4 (Cryptococcus neoformans var. neoformans serotype D (strain B-3501A) (Filobasidiella neoformans)).